We begin with the raw amino-acid sequence, 538 residues long: Cytochrome c-552 (538 aa).

An N-terminal signal peptide occupies residues M1–A55. H133 is a heme c binding site. 3 residues coordinate heme: C161, C164, and K165. Heme c is bound by residues C199, C202, H203, C264, C267, and H268. Ca(2+) contacts are provided by E270, Y271, K316, and Q318. Residue Y271 coordinates substrate. Residue H319 participates in substrate binding. Heme c is bound by residues H330, C337, C340, H341, H356, C369, C372, H373, and H448.

The protein belongs to the cytochrome c-552 family. Ca(2+) is required as a cofactor. Requires heme c as cofactor.

The protein localises to the periplasm. The enzyme catalyses 6 Fe(III)-[cytochrome c] + NH4(+) + 2 H2O = 6 Fe(II)-[cytochrome c] + nitrite + 8 H(+). The protein operates within nitrogen metabolism; nitrate reduction (assimilation). Functionally, catalyzes the reduction of nitrite to ammonia, consuming six electrons in the process. The polypeptide is Cytochrome c-552 (Haemophilus influenzae (strain ATCC 51907 / DSM 11121 / KW20 / Rd)).